The following is a 320-amino-acid chain: GTP 3',8-cyclase (320 aa).

Residues 5–225 (QFGRKINYLR…IQLIKKDEKA (221 aa)) enclose the Radical SAM core domain. Residue R14 coordinates GTP. Residues C21 and C25 each contribute to the [4Fe-4S] cluster site. An S-adenosyl-L-methionine-binding site is contributed by Y27. Residue C28 participates in [4Fe-4S] cluster binding. R64 provides a ligand contact to GTP. An S-adenosyl-L-methionine-binding site is contributed by G68. Residue T95 coordinates GTP. Position 119 (S119) interacts with S-adenosyl-L-methionine. K155 contacts GTP. M189 lines the S-adenosyl-L-methionine pocket. The [4Fe-4S] cluster site is built by C248 and C251. 253–255 (RIR) lines the GTP pocket. C265 contacts [4Fe-4S] cluster.

The protein belongs to the radical SAM superfamily. MoaA family. In terms of assembly, monomer and homodimer. [4Fe-4S] cluster is required as a cofactor.

It catalyses the reaction GTP + AH2 + S-adenosyl-L-methionine = (8S)-3',8-cyclo-7,8-dihydroguanosine 5'-triphosphate + 5'-deoxyadenosine + L-methionine + A + H(+). It participates in cofactor biosynthesis; molybdopterin biosynthesis. Catalyzes the cyclization of GTP to (8S)-3',8-cyclo-7,8-dihydroguanosine 5'-triphosphate. The protein is GTP 3',8-cyclase of Campylobacter jejuni (strain RM1221).